The chain runs to 418 residues: 3-phosphoshikimate 1-carboxyvinyltransferase (418 aa).

3-phosphoshikimate-binding residues include lysine 26, serine 27, and arginine 31. Phosphoenolpyruvate is bound at residue lysine 26. Residues glycine 97 and arginine 125 each coordinate phosphoenolpyruvate. The 3-phosphoshikimate site is built by serine 170, serine 171, glutamine 172, aspartate 297, asparagine 320, and lysine 324. Residue glutamine 172 participates in phosphoenolpyruvate binding. Aspartate 297 acts as the Proton acceptor in catalysis. The phosphoenolpyruvate site is built by arginine 328, arginine 375, and lysine 400.

It belongs to the EPSP synthase family. As to quaternary structure, monomer.

The protein resides in the cytoplasm. The enzyme catalyses 3-phosphoshikimate + phosphoenolpyruvate = 5-O-(1-carboxyvinyl)-3-phosphoshikimate + phosphate. The protein operates within metabolic intermediate biosynthesis; chorismate biosynthesis; chorismate from D-erythrose 4-phosphate and phosphoenolpyruvate: step 6/7. In terms of biological role, catalyzes the transfer of the enolpyruvyl moiety of phosphoenolpyruvate (PEP) to the 5-hydroxyl of shikimate-3-phosphate (S3P) to produce enolpyruvyl shikimate-3-phosphate and inorganic phosphate. This Pseudomonas savastanoi pv. phaseolicola (strain 1448A / Race 6) (Pseudomonas syringae pv. phaseolicola (strain 1448A / Race 6)) protein is 3-phosphoshikimate 1-carboxyvinyltransferase.